A 372-amino-acid polypeptide reads, in one-letter code: D-alanine--D-alanine ligase (372 aa).

In terms of domain architecture, ATP-grasp spans 145-349; the sequence is KTVLRAGGIP…CPNLLDQLIE (205 aa). 176 to 231 provides a ligand contact to ATP; the sequence is DRWGTSELFVKAVSLGSSVATLPVKTETEFTKAVKEVFRYDDRLMVEPRIRGREIE. Residues Asp303, Glu316, and Asn318 each contribute to the Mg(2+) site.

It belongs to the D-alanine--D-alanine ligase family. The cofactor is Mg(2+). Mn(2+) is required as a cofactor.

The protein resides in the cytoplasm. The enzyme catalyses 2 D-alanine + ATP = D-alanyl-D-alanine + ADP + phosphate + H(+). It participates in cell wall biogenesis; peptidoglycan biosynthesis. In terms of biological role, cell wall formation. In Coxiella burnetii (strain Dugway 5J108-111), this protein is D-alanine--D-alanine ligase.